The sequence spans 101 residues: Urease subunit beta (101 aa).

It belongs to the urease beta subunit family. In terms of assembly, heterotrimer of UreA (gamma), UreB (beta) and UreC (alpha) subunits. Three heterotrimers associate to form the active enzyme.

It localises to the cytoplasm. The enzyme catalyses urea + 2 H2O + H(+) = hydrogencarbonate + 2 NH4(+). It participates in nitrogen metabolism; urea degradation; CO(2) and NH(3) from urea (urease route): step 1/1. In Verminephrobacter eiseniae (strain EF01-2), this protein is Urease subunit beta.